The primary structure comprises 772 residues: Potassium transporter 24 (772 aa).

Residues 1–23 (MDVEGGGAAARRKGGWWWWREEA) are Cytoplasmic-facing. A helical membrane pass occupies residues 24 to 44 (VLAYQSLGVVYGEVAAAPLYV). At 45-66 (YRSAFAGGDIEHSAGNEEIYGA) the chain is on the extracellular side. The helical transmembrane segment at 67–87 (LSLVFWTLTLVPLAKYVLLVL) threads the bilayer. Over 88 to 150 (RADDAGEGGT…ALERHRVLQR (63 aa)) the chain is Cytoplasmic. A helical membrane pass occupies residues 151–171 (LLLLLALLGTCMVIGDGVLTP). Topologically, residues 172 to 192 (AVSVFSAVSGLELSMDKDQHK) are extracellular. Residues 193–213 (YILLPITCVILVCLFALQHYG) traverse the membrane as a helical segment. Residues 214-216 (THR) lie on the Cytoplasmic side of the membrane. The chain crosses the membrane as a helical span at residues 217 to 237 (VGFLFAPIVCLWLLCISIIGV). The Extracellular portion of the chain corresponds to 238-265 (YNIIHWNPHVYQALSPYYMYKFLRKTQT). Residues 266 to 286 (GGWMSLGGILLCVTGSEAMYA) traverse the membrane as a helical segment. Residues 287–298 (DLGHFTQNSIKM) lie on the Cytoplasmic side of the membrane. A helical membrane pass occupies residues 299 to 319 (AFTLLVYPALVLAYMGQAAYI). Topologically, residues 320–344 (SRHHNFEDGSHIGFYVSVPEKIRWP) are extracellular. Residues 345–365 (VLGIAILASVVGSQAIITGTF) form a helical membrane-spanning segment. Over 366–392 (SIIKQCSSLNCFPRVKIVHTSSTVHGQ) the chain is Cytoplasmic. A helical transmembrane segment spans residues 393 to 413 (IYIPEINWILMILCLSVTIGF). Residues 414 to 423 (RDTKHLTNAQ) are Extracellular-facing. The chain crosses the membrane as a helical span at residues 424 to 444 (GLAVITVMLVTTCLMSLVILL). At 445 to 449 (CWNKS) the chain is on the cytoplasmic side. Residues 450–470 (IVYALSFLLFFGAIEVIYFAA) traverse the membrane as a helical segment. Residues 471 to 477 (SLVKFHE) lie on the Extracellular side of the membrane. Residues 478–498 (GAWVPVTLSFIFMMVMCVWHY) traverse the membrane as a helical segment. The Cytoplasmic portion of the chain corresponds to 499-772 (GTKKKYEFDV…TVEVGMICLV (274 aa)). Residues 656 to 684 (EEGEFDGSDSTGSSAHKEINPNTTAPKPK) are disordered.

This sequence belongs to the HAK/KUP transporter (TC 2.A.72.3) family.

The protein resides in the membrane. In terms of biological role, high-affinity potassium transporter. This is Potassium transporter 24 (HAK24) from Oryza sativa subsp. japonica (Rice).